Consider the following 166-residue polypeptide: Large ribosomal subunit protein uL10 (166 aa).

Belongs to the universal ribosomal protein uL10 family. In terms of assembly, part of the ribosomal stalk of the 50S ribosomal subunit. The N-terminus interacts with L11 and the large rRNA to form the base of the stalk. The C-terminus forms an elongated spine to which L12 dimers bind in a sequential fashion forming a multimeric L10(L12)X complex.

Forms part of the ribosomal stalk, playing a central role in the interaction of the ribosome with GTP-bound translation factors. The polypeptide is Large ribosomal subunit protein uL10 (Flavobacterium psychrophilum (strain ATCC 49511 / DSM 21280 / CIP 103535 / JIP02/86)).